The sequence spans 242 residues: MSTYNKNRPQTIQIMFNSIAKQYDRTNAVLSFCLHRRWNLELVKKVQSQQTSHTLLDLCAGTGDVAFSYLNQVSAPCQAYLVDFSSEMLACAEEKAKSFGKTPHSFQYVLADVQRLPFSNQTMDCATMAYGIRNIHHPLQSLQETYRVLKPGGCLGILELTRPENKFLQIGHQLYLKTLLPLLGKWLTANENAYQYLRKSIHTFIPPGELEELVKTAGFINTGRYSLAGGIATIITGFKPMK.

S-adenosyl-L-methionine contacts are provided by residues threonine 62, aspartate 83, and 112–113 (DV).

Belongs to the class I-like SAM-binding methyltransferase superfamily. MenG/UbiE family.

The enzyme catalyses a 2-demethylmenaquinol + S-adenosyl-L-methionine = a menaquinol + S-adenosyl-L-homocysteine + H(+). Its pathway is quinol/quinone metabolism; menaquinone biosynthesis; menaquinol from 1,4-dihydroxy-2-naphthoate: step 2/2. Functionally, methyltransferase required for the conversion of demethylmenaquinol (DMKH2) to menaquinol (MKH2). The sequence is that of Demethylmenaquinone methyltransferase from Protochlamydia amoebophila (strain UWE25).